Here is a 165-residue protein sequence, read N- to C-terminus: Protein SprT (165 aa).

The 145-residue stretch at 19–163 (REKLAQANLK…RCVKCGEPLV (145 aa)) folds into the SprT-like domain. His78 provides a ligand contact to Zn(2+). Residue Glu79 is part of the active site. His82 provides a ligand contact to Zn(2+).

Belongs to the SprT family. It depends on Zn(2+) as a cofactor.

It localises to the cytoplasm. The sequence is that of Protein SprT from Enterobacter sp. (strain 638).